The sequence spans 78 residues: Large ribosomal subunit protein bL28 (78 aa).

Residues Met1–His20 form a disordered region.

It belongs to the bacterial ribosomal protein bL28 family.

The polypeptide is Large ribosomal subunit protein bL28 (Pseudomonas fluorescens (strain ATCC BAA-477 / NRRL B-23932 / Pf-5)).